Here is an 811-residue protein sequence, read N- to C-terminus: Serine/threonine-protein kinase prpf4B (811 aa).

Disordered stretches follow at residues Met-1 to Pro-257, Glu-288 to Glu-341, Lys-353 to Lys-379, and Val-408 to Gly-452. Residues Ser-46–Arg-71 are compositionally biased toward low complexity. Over residues Arg-81–Asn-202 the composition is skewed to basic and acidic residues. The segment covering Gly-203 to Tyr-215 has biased composition (polar residues). Over residues Lys-217 to His-240 the composition is skewed to basic and acidic residues. 2 stretches are compositionally biased toward polar residues: residues Gly-241–Pro-257 and Glu-293–Leu-302. Residues Ser-310–Ser-327 are compositionally biased toward low complexity. One can recognise a Protein kinase domain in the interval Tyr-490–Leu-808. Residues Ile-496–Val-504 and Lys-519 each bind ATP. Asp-619 serves as the catalytic Proton acceptor.

The protein belongs to the protein kinase superfamily. CMGC Ser/Thr protein kinase family. Post-translationally, phosphorylated. Autophosphorylated; phosphorylation inhibits interaction with its targets.

Its subcellular location is the nucleus. It localises to the chromosome. It is found in the centromere. The protein resides in the kinetochore. The catalysed reaction is L-seryl-[protein] + ATP = O-phospho-L-seryl-[protein] + ADP + H(+). It catalyses the reaction L-threonyl-[protein] + ATP = O-phospho-L-threonyl-[protein] + ADP + H(+). Serine/threonine kinase involved in spliceosomal assembly as well as mitosis and signaling regulation. This chain is Serine/threonine-protein kinase prpf4B (prp4k), found in Dictyostelium discoideum (Social amoeba).